Consider the following 234-residue polypeptide: Purine nucleoside phosphorylase DeoD-type (234 aa).

His-5 is an a purine D-ribonucleoside binding site. Phosphate-binding positions include Gly-21, Arg-25, Arg-44, and 88–91 (RVGT). Residues 178–180 (EME) and 202–203 (SD) contribute to the a purine D-ribonucleoside site. The active-site Proton donor is Asp-203.

Belongs to the PNP/UDP phosphorylase family. Homohexamer; trimer of homodimers.

The catalysed reaction is a purine D-ribonucleoside + phosphate = a purine nucleobase + alpha-D-ribose 1-phosphate. It catalyses the reaction a purine 2'-deoxy-D-ribonucleoside + phosphate = a purine nucleobase + 2-deoxy-alpha-D-ribose 1-phosphate. Functionally, catalyzes the reversible phosphorolytic breakdown of the N-glycosidic bond in the beta-(deoxy)ribonucleoside molecules, with the formation of the corresponding free purine bases and pentose-1-phosphate. The chain is Purine nucleoside phosphorylase DeoD-type from Lactococcus lactis subsp. cremoris (strain MG1363).